A 332-amino-acid polypeptide reads, in one-letter code: tRNA-dihydrouridine(20/20a) synthase (332 aa).

Residues 19 to 21 (PML) and glutamine 71 contribute to the FMN site. Catalysis depends on cysteine 101, which acts as the Proton donor. FMN-binding positions include lysine 140, histidine 173, 213 to 215 (NGG), and 235 to 236 (GR).

Belongs to the Dus family. DusA subfamily. The cofactor is FMN.

It catalyses the reaction 5,6-dihydrouridine(20) in tRNA + NADP(+) = uridine(20) in tRNA + NADPH + H(+). The enzyme catalyses 5,6-dihydrouridine(20) in tRNA + NAD(+) = uridine(20) in tRNA + NADH + H(+). It carries out the reaction 5,6-dihydrouridine(20a) in tRNA + NADP(+) = uridine(20a) in tRNA + NADPH + H(+). The catalysed reaction is 5,6-dihydrouridine(20a) in tRNA + NAD(+) = uridine(20a) in tRNA + NADH + H(+). Its function is as follows. Catalyzes the synthesis of 5,6-dihydrouridine (D), a modified base found in the D-loop of most tRNAs, via the reduction of the C5-C6 double bond in target uridines. Specifically modifies U20 and U20a in tRNAs. The chain is tRNA-dihydrouridine(20/20a) synthase from Salmonella typhimurium (strain LT2 / SGSC1412 / ATCC 700720).